We begin with the raw amino-acid sequence, 645 residues long: Sodium-dependent phosphate transporter 2 (645 aa).

Residues 1-5 (MAMDE) lie on the Extracellular side of the membrane. The chain crosses the membrane as a helical span at residues 6–26 (YLWMVILGFIIAFILAFSVGA). Residues 27–46 (NDVANSFGTAVGSGVVTLRQ) are Cytoplasmic-facing. A helical transmembrane segment spans residues 47–67 (ACILASIFETTGSVLLGAKVG). Residues 68-86 (ETIRKGIIDVNLYNNTVET) lie on the Extracellular side of the membrane. Asn81 is a glycosylation site (N-linked (GlcNAc...) asparagine). A helical membrane pass occupies residues 87–107 (LMAGEVSAMVGSAVWQLIASF). Topologically, residues 108-109 (LR) are cytoplasmic. Residues 110-130 (FPISGTHCIVGATIGFSLVAI) traverse the membrane as a helical segment. Topologically, residues 131–142 (GTQGVQWMELVK) are extracellular. A helical transmembrane segment spans residues 143–163 (IVASWFISPLLSGFMSGVLFV). The Cytoplasmic segment spans residues 164–190 (LIRMFILKKEDPVPNGLRALPVFYAAT). Residues 191–211 (IAINVFSIMYTGAPVMGLVLP) form a helical membrane-spanning segment. At 212–213 (MW) the chain is on the extracellular side. The chain crosses the membrane as a helical span at residues 214-234 (AIALISFGVALLFALFVWLFV). Over 235-475 (CPWMRRKITG…EEKEEKDSPE (241 aa)) the chain is Cytoplasmic. Residues Ser253, Ser256, Ser259, Ser268, Ser316, and Ser379 each carry the phosphoserine modification. The interval 275 to 320 (PGAKAHDDSTVPLTGSAADPSGTSESMSGGHHPRAPYGRALSMTHG) is disordered. Residues 448–471 (RLAPPLAEPEPPRDDPADEEKEEK) form a disordered region. A helical membrane pass occupies residues 476-496 (VHLLFHFLQVLTACFGSFAHG). The Extracellular segment spans residues 497 to 523 (GNDVSNAIGPLVALWLIYEQGAVLQEA). Residues 524–544 (ATPVWLLFYGGVGICTGLWVW) traverse the membrane as a helical segment. Topologically, residues 545 to 564 (GRRVIQTMGKDLTPITPSSG) are cytoplasmic. A helical transmembrane segment spans residues 565 to 579 (FTIELASAFTVVIAS). Topologically, residues 580-586 (NIGLPVS) are extracellular. The chain crosses the membrane as a helical span at residues 587–602 (TTHCKVGSVVAVGWIR). Topologically, residues 603–614 (SRKAVDWRLFRN) are cytoplasmic. Residues 615–635 (IFVAWFVTVPVAGLFSAAIMA) traverse the membrane as a helical segment. At 636–645 (LLIHGILPFV) the chain is on the extracellular side.

The protein belongs to the inorganic phosphate transporter (PiT) (TC 2.A.20) family. Homodimer.

It is found in the cell membrane. It localises to the apical cell membrane. It carries out the reaction 2 Na(+)(out) + phosphate(out) = 2 Na(+)(in) + phosphate(in). In terms of biological role, sodium-phosphate symporter which preferentially transports the monovalent form of phosphate with a stoichiometry of two sodium ions per phosphate ion. Plays a critical role in the determination of bone quality and strength by providing phosphate for bone mineralization. Required to maintain normal cerebrospinal fluid phosphate levels. Mediates phosphate-induced calcification of vascular smooth muscle cells (VCMCs) and can functionally compensate for loss of SLC20A1 in VCMCs. In Bos taurus (Bovine), this protein is Sodium-dependent phosphate transporter 2 (SLC20A2).